We begin with the raw amino-acid sequence, 310 residues long: L-lactate dehydrogenase (310 aa).

Residues Val11, Asp32, Tyr62, and Gly76 to Val77 each bind NAD(+). Residues Gln79, Arg85, and Asn117–Asp120 each bind substrate. NAD(+)-binding positions include Ala115–Asn117 and Ser140. Position 145 to 148 (Asp145 to Arg148) interacts with substrate. The beta-D-fructose 1,6-bisphosphate site is built by Arg150 and His165. His172 serves as the catalytic Proton acceptor. A Phosphotyrosine modification is found at Tyr218. Residue Thr227 coordinates substrate.

The protein belongs to the LDH/MDH superfamily. LDH family. As to quaternary structure, homotetramer.

It is found in the cytoplasm. The catalysed reaction is (S)-lactate + NAD(+) = pyruvate + NADH + H(+). It functions in the pathway fermentation; pyruvate fermentation to lactate; (S)-lactate from pyruvate: step 1/1. With respect to regulation, allosterically activated by fructose 1,6-bisphosphate (FBP). In terms of biological role, catalyzes the conversion of lactate to pyruvate. The chain is L-lactate dehydrogenase from Thermus thermophilus (strain ATCC BAA-163 / DSM 7039 / HB27).